Consider the following 324-residue polypeptide: MSKLRIPILLVLFIVSCCSAEQCGTQAGGALCPGGLCCSKFGWCGSTSEYCGDGCQSQCSGSSGGGTLSSLISGDTFNNMLKHRNDNACQGKPFYTYDAFLSAAKAFPNFANKGDTATKKREIAAFLGQTSHETTGGWPTAPDGPYAWGYCFLREQNPSTYCQASSEFPCASGKQYYGRGPIQISWNYNYGQCGRAIGVDLLNNPDLVATDPVISFKTALWFWMTPQSPKPSCHDVITGGWTPSSADRAAGRLPGYGTVTNIINGGLECGRGQDSRVQDRIGFYKRYCDIFGIGYGDNLDCYSQRPFGSSLPLSSILLDTVAAA.

Positions 1–20 are cleaved as a signal peptide; the sequence is MSKLRIPILLVLFIVSCCSA. The Chitin-binding type-1 domain maps to 21–61; the sequence is EQCGTQAGGALCPGGLCCSKFGWCGSTSEYCGDGCQSQCSG. Intrachain disulfides connect Cys-23-Cys-38, Cys-32-Cys-44, Cys-37-Cys-51, and Cys-55-Cys-59. Glu-133 acts as the Proton donor in catalysis. Cystine bridges form between Cys-151–Cys-170 and Cys-269–Cys-301. A propeptide spans 310-324 (removed in mature form); that stretch reads SLPLSSILLDTVAAA.

Belongs to the glycosyl hydrolase 19 family. Chitinase class I subfamily.

It catalyses the reaction Random endo-hydrolysis of N-acetyl-beta-D-glucosaminide (1-&gt;4)-beta-linkages in chitin and chitodextrins.. Functionally, defense against chitin-containing fungal pathogens. This is Endochitinase A2 (CHI2) from Pisum sativum (Garden pea).